Here is a 155-residue protein sequence, read N- to C-terminus: Interleukin-2 (155 aa).

A signal peptide spans M1–G20. T23 is a glycosylation site (O-linked (GalNAc...) threonine). C79 and C127 are joined by a disulfide.

It belongs to the IL-2 family.

The protein resides in the secreted. In terms of biological role, cytokine produced by activated CD4-positive helper T-cells and to a lesser extend activated CD8-positive T-cells and natural killer (NK) cells that plays pivotal roles in the immune response and tolerance. Binds to a receptor complex composed of either the high-affinity trimeric IL-2R (IL2RA/CD25, IL2RB/CD122 and IL2RG/CD132) or the low-affinity dimeric IL-2R (IL2RB and IL2RG). Interaction with the receptor leads to oligomerization and conformation changes in the IL-2R subunits resulting in downstream signaling starting with phosphorylation of JAK1 and JAK3. In turn, JAK1 and JAK3 phosphorylate the receptor to form a docking site leading to the phosphorylation of several substrates including STAT5. This process leads to activation of several pathways including STAT, phosphoinositide-3-kinase/PI3K and mitogen-activated protein kinase/MAPK pathways. Functions as a T-cell growth factor and can increase NK-cell cytolytic activity as well. Promotes strong proliferation of activated B-cells and subsequently immunoglobulin production. Plays a pivotal role in regulating the adaptive immune system by controlling the survival and proliferation of regulatory T-cells, which are required for the maintenance of immune tolerance. Moreover, participates in the differentiation and homeostasis of effector T-cell subsets, including Th1, Th2, Th17 as well as memory CD8-positive T-cells. In Boselaphus tragocamelus (Nilgai), this protein is Interleukin-2 (IL2).